The sequence spans 466 residues: Secreted RxLR effector protein 101 (466 aa).

A signal peptide spans 1–21 (MRGAYSVITALLVVASSQIAA). The short motif at 48-63 (RYLRGSQHVHDSNEER) is the RxLR-dEER element. Disordered stretches follow at residues 99–127 (KMPHAATAGKKVSRVTRTGKKMTSHGANA) and 384–405 (RTFNGNTDTASLPSKRSKVRSS). Basic residues predominate over residues 109–121 (KVSRVTRTGKKMT). Polar residues predominate over residues 385–395 (TFNGNTDTASL).

The protein belongs to the RxLR effector family.

Its subcellular location is the secreted. It localises to the host nucleus. Its function is as follows. Secreted effector that partially suppresses the host cell death induced by cell death-inducing proteins. The protein is Secreted RxLR effector protein 101 of Plasmopara viticola (Downy mildew of grapevine).